Reading from the N-terminus, the 488-residue chain is Aerolysin (488 aa).

A signal peptide spans 1 to 24; it reads MMNRIITANLAFLASSLMLAQVQA. 2 disulfides stabilise this stretch: Cys-43–Cys-99 and Cys-183–Cys-188. The segment at 69 to 85 is interaction with host N-linked glycan; it reads WQITGLADRWVIMGPGY. Residues 256 to 288 are part of the transmembrane beta-barrel after proteolytic activation of the toxin and insertion into the host membrane; that stretch reads YSLSEKVTTKNKFQWPLVGETELAIEIAASQSW. Residues 346–355 are interaction with glycans from host GPI-anchor; it reads RWGGNAWYTH. A propeptide spanning residues 444–488 is cleaved from the precursor; it reads TRSAKAAQLRSASAEEVALTSVDLDSEALANEGFGNVSLTIVPVQ.

This sequence belongs to the aerolysin family. Homodimer in solution; homoheptamer in the host membrane. After binding to GPI-anchored proteins in target membranes and proteolytic removal of the C-terminal propeptide, the protein assembles into a heptameric pre-pore complex. A further conformation change leads to insertion into the host membrane. In terms of processing, proteolytic cleavage and subsequent release of the propeptide trigger a major conformation change, leading to the formation of a heptameric pre-pore that then inserts into the host membrane.

It is found in the secreted. It localises to the host cell membrane. Its function is as follows. Secreted, cytolytic toxin that forms pores in host membranes after proteolytic removal of a C-terminal propeptide, leading to destruction of the membrane permeability barrier and cell death. The pores are formed by transmembrane beta-strands and are approximately 3 nm in diameter. In Aeromonas sobria, this protein is Aerolysin (asa1).